Here is a 700-residue protein sequence, read N- to C-terminus: Probable pre-mRNA-splicing factor ATP-dependent RNA helicase DEAH4 (700 aa).

N-acetylalanine is present on A2. The region spanning 14-178 (VETVEKNSVV…FSGCPVLNVP (165 aa)) is the Helicase ATP-binding domain. ATP is bound at residue 27–34 (GETGSGKS). The DEAH box signature appears at 124-127 (DEAH). In terms of domain architecture, Helicase C-terminal spans 200-377 (SLKVAIDIHV…GSVLYLKSLD (178 aa)). Disordered regions lie at residues 463 to 486 (PARS…NGSG) and 654 to 682 (GPAP…SENV).

This sequence belongs to the DEAD box helicase family. DEAH subfamily. PRP22 sub-subfamily.

It carries out the reaction ATP + H2O = ADP + phosphate + H(+). In terms of biological role, may be involved in pre-mRNA splicing. The chain is Probable pre-mRNA-splicing factor ATP-dependent RNA helicase DEAH4 from Arabidopsis thaliana (Mouse-ear cress).